The sequence spans 376 residues: Glucose-1-phosphate adenylyltransferase (376 aa).

Alpha-D-glucose 1-phosphate is bound by residues Tyr101, Gly166, 181-182 (EK), and Ser192.

Belongs to the bacterial/plant glucose-1-phosphate adenylyltransferase family. Homotetramer.

The catalysed reaction is alpha-D-glucose 1-phosphate + ATP + H(+) = ADP-alpha-D-glucose + diphosphate. It functions in the pathway glycan biosynthesis; glycogen biosynthesis. Involved in the biosynthesis of ADP-glucose, a building block required for the elongation reactions to produce glycogen. Catalyzes the reaction between ATP and alpha-D-glucose 1-phosphate (G1P) to produce pyrophosphate and ADP-Glc. The polypeptide is Glucose-1-phosphate adenylyltransferase (Bacillus cereus (strain ATCC 14579 / DSM 31 / CCUG 7414 / JCM 2152 / NBRC 15305 / NCIMB 9373 / NCTC 2599 / NRRL B-3711)).